Reading from the N-terminus, the 131-residue chain is Fumarate reductase subunit C (131 aa).

Transmembrane regions (helical) follow at residues 30 to 50 (EGTAVPAVWFSIELIFGLFAL), 57 to 77 (WMGFVGFLQNPVVVILNLIAL), and 109 to 129 (IIKGLWVVTAVVTVVILYVAL).

It belongs to the FrdC family. As to quaternary structure, part of an enzyme complex containing four subunits: a flavoprotein (FrdA), an iron-sulfur protein (FrdB), and two hydrophobic anchor proteins (FrdC and FrdD).

The protein localises to the cell inner membrane. In terms of biological role, two distinct, membrane-bound, FAD-containing enzymes are responsible for the catalysis of fumarate and succinate interconversion; fumarate reductase is used in anaerobic growth, and succinate dehydrogenase is used in aerobic growth. Anchors the catalytic components of the fumarate reductase complex to the cell inner membrane, binds quinones. In Citrobacter koseri (strain ATCC BAA-895 / CDC 4225-83 / SGSC4696), this protein is Fumarate reductase subunit C.